The sequence spans 67 residues: MAMSTNRIGGAIDKGVGAAKEAVGKATGNARLQVEGAAQKAKGDLQNKVGKAQDKARRRDQALNARL.

The disordered stretch occupies residues 37-67 (AAQKAKGDLQNKVGKAQDKARRRDQALNARL). The segment covering 41–61 (AKGDLQNKVGKAQDKARRRDQ) has biased composition (basic and acidic residues).

The protein belongs to the UPF0337 (CsbD) family.

The sequence is that of UPF0337 protein CC_0938 from Caulobacter vibrioides (strain ATCC 19089 / CIP 103742 / CB 15) (Caulobacter crescentus).